The following is a 230-amino-acid chain: MKKITIAIDGFSSTGKSTLAKQLAKELEYVYVDTGAMYRAVAYFAMQNKFIGADFFNKEALIEALPKIQLEFKFNSDLGFAEMYLNGENVEKQIRTIEVSNFVSKVAEVSEVRSKLVEQQQEMGTNKAIVMDGRDIGTVVFPNAELKIFMTASAETRAQRRFDELQQKGDNVSYEDVLKNVVERDYIDTHREDSPLVIADDAIEIDNSYLNKEEQFAAVLELVNDVVKID.

Glycine 10–threonine 18 contacts ATP.

Belongs to the cytidylate kinase family. Type 1 subfamily.

The protein resides in the cytoplasm. It carries out the reaction CMP + ATP = CDP + ADP. The enzyme catalyses dCMP + ATP = dCDP + ADP. The polypeptide is Cytidylate kinase (Flavobacterium johnsoniae (strain ATCC 17061 / DSM 2064 / JCM 8514 / BCRC 14874 / CCUG 350202 / NBRC 14942 / NCIMB 11054 / UW101) (Cytophaga johnsonae)).